The sequence spans 214 residues: Galactokinase (214 aa).

The alpha-D-galactose site is built by Arg-47, Asp-53, His-54, and Asp-56. Residues Gly-149, Gly-151, Ser-153, and Ser-154 each coordinate ATP. An alpha-D-galactose-binding site is contributed by Asp-199. The active-site Proton acceptor is Asp-199.

This sequence belongs to the GHMP kinase family. GalK subfamily.

The enzyme catalyses alpha-D-galactose + ATP = alpha-D-galactose 1-phosphate + ADP + H(+). Its pathway is carbohydrate metabolism; galactose metabolism. In terms of biological role, galactokinase is a key enzyme in the galactose metabolism where it catalyzes the conversion of alpha-D-galactose to galactose 1-phosphate. Can also induce the transcription of the gal genes in response to the organism being challenged with galactose as the sole source of carbon. This Candida maltosa (Yeast) protein is Galactokinase.